The following is a 360-amino-acid chain: MFLWLAHFSNWLTGLNIFQYTTFRAVMAALTALAFSLMFGPWTIRRLTALKCGQAVRTDGPQTHLVKNGTPTMGGSLILTAITVSTLLWGNWANPYIWILLGVLLATGALGFYDDWRKVVYKDPNGVSAKFKMVWQSSVAIIASLALFYLAANSANNILIVPFFKQIALPLGVVGFLVLSYLTIVGTSNAVNLTDGLDGLATFPVVLVAAGLAIFAYASGHSQFAQYLQLPYVAGANEVVIFCTAMCGACLGFLWFNAYPAQVFMGDVGALALGAALGTVAVIVRQEFVLVIMGGLFVVEAVSVMLQVGWYKKTKKRIFLMAPIHHHYEQKGWKETQVVVRFWIITIVLVLIGLSTLKIR.

10 helical membrane-spanning segments follow: residues 24–44 (RAVMAALTALAFSLMFGPWTI), 69–89 (GTPTMGGSLILTAITVSTLLW), 92–112 (WANPYIWILLGVLLATGALGF), 133–153 (MVWQSSVAIIASLALFYLAAN), 158–178 (ILIVPFFKQIALPLGVVGFLV), 199–219 (GLATFPVVLVAAGLAIFAYAS), 239–259 (VVIFCTAMCGACLGFLWFNAY), 263–283 (VFMGDVGALALGAALGTVAVI), 288–308 (FVLVIMGGLFVVEAVSVMLQV), and 337–357 (QVVVRFWIITIVLVLIGLSTL).

Belongs to the glycosyltransferase 4 family. MraY subfamily. Requires Mg(2+) as cofactor.

The protein resides in the cell inner membrane. The enzyme catalyses UDP-N-acetyl-alpha-D-muramoyl-L-alanyl-gamma-D-glutamyl-meso-2,6-diaminopimeloyl-D-alanyl-D-alanine + di-trans,octa-cis-undecaprenyl phosphate = di-trans,octa-cis-undecaprenyl diphospho-N-acetyl-alpha-D-muramoyl-L-alanyl-D-glutamyl-meso-2,6-diaminopimeloyl-D-alanyl-D-alanine + UMP. It participates in cell wall biogenesis; peptidoglycan biosynthesis. Its function is as follows. Catalyzes the initial step of the lipid cycle reactions in the biosynthesis of the cell wall peptidoglycan: transfers peptidoglycan precursor phospho-MurNAc-pentapeptide from UDP-MurNAc-pentapeptide onto the lipid carrier undecaprenyl phosphate, yielding undecaprenyl-pyrophosphoryl-MurNAc-pentapeptide, known as lipid I. The chain is Phospho-N-acetylmuramoyl-pentapeptide-transferase from Neisseria meningitidis serogroup C / serotype 2a (strain ATCC 700532 / DSM 15464 / FAM18).